The sequence spans 540 residues: Arylsulfatase K (540 aa).

The first 22 residues, 1–22 (MLLLWVSVVAASALAAPAPGAD), serve as a signal peptide directing secretion. Residues Asp-44 and Cys-84 each contribute to the Ca(2+) site. Cys-84 (nucleophile) is an active-site residue. Position 84 is a 3-oxoalanine (Cys) (Cys-84). Asn-112 carries N-linked (GlcNAc...) asparagine glycosylation. Lys-132 contacts substrate. N-linked (GlcNAc...) asparagine glycosylation is present at Asn-197. Position 255 (His-255) interacts with substrate. N-linked (GlcNAc...) asparagine glycosylation is present at Asn-266. Ca(2+)-binding residues include Asp-317 and His-318. 3 N-linked (GlcNAc...) asparagine glycosylation sites follow: Asn-379, Asn-417, and Asn-502.

It belongs to the sulfatase family. It depends on Ca(2+) as a cofactor. In terms of processing, the conversion to 3-oxoalanine (also known as C-formylglycine, FGly), of a serine or cysteine residue in prokaryotes and of a cysteine residue in eukaryotes, is critical for catalytic activity. The 75-kDa precursor undergoes proteolytic processing to yield a 23 kDa form. Post-translationally, N-glycosylated with both high mannose and complex type sugars.

Its subcellular location is the secreted. It localises to the lysosome. The enzyme catalyses an aryl sulfate + H2O = a phenol + sulfate + H(+). It carries out the reaction Hydrolysis of the 2-sulfate groups of the 2-O-sulfo-D-glucuronate residues of chondroitin sulfate, heparin and heparitin sulfate.. Catalyzes the hydrolysis of pseudosubstrates such as p-nitrocatechol sulfate and p-nitrophenyl sulfate. Catalyzes the hydrolysis of the 2-sulfate groups of the 2-O-sulfo-D-glucuronate residues of chondroitin sulfate, heparin and heparitin sulfate. Acts selectively on 2-sulfoglucuronate and lacks activity against 2-sulfoiduronate. This chain is Arylsulfatase K (ARSK), found in Bos taurus (Bovine).